A 375-amino-acid chain; its full sequence is Histidine biosynthesis bifunctional protein HisB (375 aa).

Positions 1-168 (MTPILFVDRD…GIAHELADAP (168 aa)) are histidinol-phosphatase. The Nucleophile role is filled by Asp-8. Residues Asp-8, Asp-10, and Asp-128 each coordinate Mg(2+). The active-site Proton donor is the Asp-10. Residues 169–375 (RRAVVQRNTK…TALPSTKGAL (207 aa)) form an imidazoleglycerol-phosphate dehydratase region.

The protein in the N-terminal section; belongs to the histidinol-phosphatase family. This sequence in the C-terminal section; belongs to the imidazoleglycerol-phosphate dehydratase family. The cofactor is Mg(2+).

The protein localises to the cytoplasm. It carries out the reaction D-erythro-1-(imidazol-4-yl)glycerol 3-phosphate = 3-(imidazol-4-yl)-2-oxopropyl phosphate + H2O. The catalysed reaction is L-histidinol phosphate + H2O = L-histidinol + phosphate. The protein operates within amino-acid biosynthesis; L-histidine biosynthesis; L-histidine from 5-phospho-alpha-D-ribose 1-diphosphate: step 6/9. It participates in amino-acid biosynthesis; L-histidine biosynthesis; L-histidine from 5-phospho-alpha-D-ribose 1-diphosphate: step 8/9. The chain is Histidine biosynthesis bifunctional protein HisB from Xanthomonas campestris pv. campestris (strain 8004).